Consider the following 361-residue polypeptide: Phospho-N-acetylmuramoyl-pentapeptide-transferase (361 aa).

Transmembrane regions (helical) follow at residues 27 to 47 (ILAS…MIRW), 70 to 90 (GTPT…CLLW), 97 to 117 (SLWL…VDDY), 134 to 154 (YFWQ…NASL), 167 to 187 (TVTW…IVGS), 199 to 219 (GLAI…AYAS), 236 to 256 (TGEL…FLWY), 263 to 283 (VFMG…VAVV), 288 to 308 (LVLL…ILQV), and 338 to 358 (KVIV…LATL).

It belongs to the glycosyltransferase 4 family. MraY subfamily. Mg(2+) is required as a cofactor.

Its subcellular location is the cell inner membrane. The catalysed reaction is UDP-N-acetyl-alpha-D-muramoyl-L-alanyl-gamma-D-glutamyl-meso-2,6-diaminopimeloyl-D-alanyl-D-alanine + di-trans,octa-cis-undecaprenyl phosphate = di-trans,octa-cis-undecaprenyl diphospho-N-acetyl-alpha-D-muramoyl-L-alanyl-D-glutamyl-meso-2,6-diaminopimeloyl-D-alanyl-D-alanine + UMP. It participates in cell wall biogenesis; peptidoglycan biosynthesis. Functionally, catalyzes the initial step of the lipid cycle reactions in the biosynthesis of the cell wall peptidoglycan: transfers peptidoglycan precursor phospho-MurNAc-pentapeptide from UDP-MurNAc-pentapeptide onto the lipid carrier undecaprenyl phosphate, yielding undecaprenyl-pyrophosphoryl-MurNAc-pentapeptide, known as lipid I. The polypeptide is Phospho-N-acetylmuramoyl-pentapeptide-transferase (Legionella pneumophila subsp. pneumophila (strain Philadelphia 1 / ATCC 33152 / DSM 7513)).